Consider the following 38-residue polypeptide: Mu-agatoxin-Hc1b (38 aa).

4 disulfide bridges follow: Cys-3–Cys-19, Cys-10–Cys-24, Cys-18–Cys-34, and Cys-26–Cys-32. Residue Ser-38 is modified to Serine amide.

This sequence belongs to the neurotoxin 07 (Beta/delta-agtx) family. 02 (aga-3) subfamily. In terms of tissue distribution, expressed by the venom gland.

It is found in the secreted. In terms of biological role, insecticidal neurotoxin that induces irreversible neuromuscular blockade in house crickets (A.domesticus). Modifies presynaptic voltage-gated sodium channels (Nav), causing them to open at the normal resting potential of the nerve. This leads to spontaneous release of neurotransmitter and repetitive action potentials in motor neurons. The sequence is that of Mu-agatoxin-Hc1b from Hololena curta (Funnel-web spider).